The following is a 209-amino-acid chain: Uracil phosphoribosyltransferase (209 aa).

5-phospho-alpha-D-ribose 1-diphosphate is bound by residues R79, R104, and 131–139 (DPMLATGGS). Residues I194 and 199–201 (GDA) each bind uracil. D200 lines the 5-phospho-alpha-D-ribose 1-diphosphate pocket.

It belongs to the UPRTase family. It depends on Mg(2+) as a cofactor.

The catalysed reaction is UMP + diphosphate = 5-phospho-alpha-D-ribose 1-diphosphate + uracil. It functions in the pathway pyrimidine metabolism; UMP biosynthesis via salvage pathway; UMP from uracil: step 1/1. Its activity is regulated as follows. Allosterically activated by GTP. Functionally, catalyzes the conversion of uracil and 5-phospho-alpha-D-ribose 1-diphosphate (PRPP) to UMP and diphosphate. The sequence is that of Uracil phosphoribosyltransferase from Streptococcus uberis (strain ATCC BAA-854 / 0140J).